Consider the following 854-residue polypeptide: Zinc finger protein 341 (854 aa).

The C2H2-type 1; atypical zinc finger occupies 53–76 (FLCGKCKKQFNSLPAFMTHKREQC). Residues 152-217 (DQPMPQGPPP…GRPNPGGNGV (66 aa)) are disordered. Residues 163–176 (QSSLNMHSVPSYLT) are compositionally biased toward polar residues. A compositionally biased stretch (pro residues) spans 177-210 (QPPPPPPPPPPLPPPPPPQPPPPPPQSLGPPGRP). 2 consecutive C2H2-type zinc fingers follow at residues 322–344 (LKCSYCDKSFTKNFDLQQHIRSH) and 350–372 (FQCIACGRAFAQKSNVKKHMQTH). Residues 399–434 (SRQEDEESTGLGQPLPGAPQPQALSTAGEEEGDKPE) form a disordered region. The segment covering 408 to 422 (GLGQPLPGAPQPQAL) has biased composition (low complexity). 9 C2H2-type zinc fingers span residues 445–467 (YLCQFCPSKFSTYFQLKSHMTQH), 473–497 (YKCVVKSCAQTFPKLDTFLEHIKSH), 503–525 (YRCHLCGKDFPSLYDLGVHQYSH), 540–564 (YKCVKCVNKYSTPEALEHHLQTATH), 566–588 (FPCPHCQKVFPCERYLRRHLPTH), 594–616 (FKCQVCKKFFRREHYLKLHAHIH), 622–644 (YKCSVCESAFNRKDKLKRHMLIH), 650–677 (YKCPFSTHTGCSKEFNRPDKLKAHILSH), and 683–705 (HKCALCSKSFSRRAHLAEHQRAH). The tract at residues 731 to 763 (CRLGPQKDKDLQTRRPPQRRAAPRSCGSGGRKV) is disordered.

Belongs to the krueppel C2H2-type zinc-finger protein family. In terms of assembly, binds DNA and to the STAT3 promoter.

It localises to the nucleus. Transcriptional activator of STAT3 involved in the regulation of immune homeostasis. Also able to activate STAT1 transcription. This chain is Zinc finger protein 341 (ZNF341), found in Homo sapiens (Human).